The chain runs to 237 residues: MRFSPSLEQGRLLRRYKRFLADIELASGEQMTIHCPNTGSMLNCMREGGQVWFSRSNDPKRKLPGTWEISETPQGRLACVNTGRANALVEEALRAGTITELAGFTALKREVAYGEEGSRIDFRLEFEGAPAYVEVKSVTLGYPDTAVAAFPDAVTQRGAKHLRELAKLARQGVRAVQLYCVNLTGIDAVRPAEEIDTAYAQALRAAVADGVEVLAYGTRLDAEGIVIDRRLPVLLTP.

Belongs to the SfsA family.

The polypeptide is Sugar fermentation stimulation protein homolog (Pseudomonas putida (strain ATCC 47054 / DSM 6125 / CFBP 8728 / NCIMB 11950 / KT2440)).